The sequence spans 290 residues: Glycine--tRNA ligase alpha subunit (290 aa).

Belongs to the class-II aminoacyl-tRNA synthetase family. As to quaternary structure, tetramer of two alpha and two beta subunits.

Its subcellular location is the cytoplasm. The catalysed reaction is tRNA(Gly) + glycine + ATP = glycyl-tRNA(Gly) + AMP + diphosphate. This Prochlorococcus marinus (strain NATL2A) protein is Glycine--tRNA ligase alpha subunit.